Consider the following 545-residue polypeptide: Membrane protein insertase YidC (545 aa).

Residues 6-26 traverse the membrane as a helical segment; sequence NLLLIALLFVSFMIWQAWQTD. Residues 31 to 54 are disordered; sequence PVAQTTQQTSNPATGDAASSAVPA. The next 4 helical transmembrane spans lie at 342 to 362, 417 to 437, 455 to 475, and 496 to 516; these read KFIHGFIGNWGFSIIIITFIV, LGGCLPLVIQMPIFLALYYML, LSAQDPYYILPILMGVTMFFI, and PVIFTVFFLWFPSGLVLYYIV.

It belongs to the OXA1/ALB3/YidC family. Type 1 subfamily. Interacts with the Sec translocase complex via SecD. Specifically interacts with transmembrane segments of nascent integral membrane proteins during membrane integration.

Its subcellular location is the cell inner membrane. Its function is as follows. Required for the insertion and/or proper folding and/or complex formation of integral membrane proteins into the membrane. Involved in integration of membrane proteins that insert both dependently and independently of the Sec translocase complex, as well as at least some lipoproteins. Aids folding of multispanning membrane proteins. The chain is Membrane protein insertase YidC from Serratia proteamaculans (strain 568).